The following is a 243-amino-acid chain: Mannosyl-3-phosphoglycerate phosphatase (243 aa).

Asp-8 functions as the Nucleophile in the catalytic mechanism. Positions 8, 10, 169, and 204 each coordinate Mg(2+).

This sequence belongs to the HAD-like hydrolase superfamily. MPGP family. Requires Mg(2+) as cofactor.

Its subcellular location is the cytoplasm. The enzyme catalyses 2-O-(alpha-D-mannosyl)-3-phosphoglycerate + H2O = (2R)-2-O-(alpha-D-mannosyl)-glycerate + phosphate. The protein operates within carbohydrate biosynthesis; 2-(alpha-D-mannosyl)-D-glycerate biosynthesis; 2-(alpha-D-mannosyl)-D-glycerate from GDP-alpha-D-mannose (MPG route): step 2/2. Its function is as follows. Hydrolyzes mannosyl-3-phosphoglycerate (MPG) to form the osmolyte mannosylglycerate (MG). The enzyme is absolutely specific for MPG. The protein is Mannosyl-3-phosphoglycerate phosphatase of Pyrococcus horikoshii (strain ATCC 700860 / DSM 12428 / JCM 9974 / NBRC 100139 / OT-3).